The chain runs to 142 residues: Inner membrane protein YqaA (142 aa).

Residues 1 to 2 lie on the Cytoplasmic side of the membrane; the sequence is MS. Residues 3-23 form a helical membrane-spanning segment; sequence EALSLFSLFASSFLSATLLPG. Residues 24–26 are Periplasmic-facing; the sequence is NSE. A helical transmembrane segment spans residues 27 to 47; it reads VVLVAMLLSGISHPWVLVLTA. The Cytoplasmic segment spans residues 48-86; sequence TMGNSLGGLTNVILGRFFPLRKTSRWQEKATGWLKRYGA. Residues 87–107 form a helical membrane-spanning segment; the sequence is VTLLLSWMPVVGDLLCLLAGW. Residues 108 to 142 are Periplasmic-facing; it reads MRISWGPVIFFLCLGKALRYVAVAAATVQGMMWWH.

The protein to H.influenzae HI_0489.

The protein localises to the cell inner membrane. The chain is Inner membrane protein YqaA (yqaA) from Escherichia coli (strain K12).